A 157-amino-acid polypeptide reads, in one-letter code: Protein-export protein SecB (157 aa).

This sequence belongs to the SecB family. As to quaternary structure, homotetramer, a dimer of dimers. One homotetramer interacts with 1 SecA dimer.

It is found in the cytoplasm. Functionally, one of the proteins required for the normal export of preproteins out of the cell cytoplasm. It is a molecular chaperone that binds to a subset of precursor proteins, maintaining them in a translocation-competent state. It also specifically binds to its receptor SecA. In Proteus mirabilis (strain HI4320), this protein is Protein-export protein SecB.